The following is a 359-amino-acid chain: Uracil-DNA glycosylase (359 aa).

The N-terminal 21 residues, 1–21 (MWCMRRLPTNSVMTVARKRKQ), are a transit peptide targeting the mitochondrion. The active-site Proton acceptor is Asp-162.

Belongs to the uracil-DNA glycosylase (UDG) superfamily. UNG family.

The protein resides in the mitochondrion. It localises to the nucleus. It carries out the reaction Hydrolyzes single-stranded DNA or mismatched double-stranded DNA and polynucleotides, releasing free uracil.. Its function is as follows. Excises uracil residues from the DNA which can arise as a result of misincorporation of dUMP residues by DNA polymerase or due to deamination of cytosine. Not involved in strand-directed mismatch repair. This is Uracil-DNA glycosylase from Saccharomyces cerevisiae (strain ATCC 204508 / S288c) (Baker's yeast).